The chain runs to 131 residues: UPF0102 protein YraN (131 aa).

A compositionally biased stretch (polar residues) spans methionine 1–threonine 19. The disordered stretch occupies residues methionine 1–glycine 20.

This sequence belongs to the UPF0102 family.

This Escherichia fergusonii (strain ATCC 35469 / DSM 13698 / CCUG 18766 / IAM 14443 / JCM 21226 / LMG 7866 / NBRC 102419 / NCTC 12128 / CDC 0568-73) protein is UPF0102 protein YraN.